The following is a 936-amino-acid chain: Isoleucine--tRNA ligase (936 aa).

Positions 58–68 match the 'HIGH' region motif; it reads PYANGRAHLGT. Glu561 lines the L-isoleucyl-5'-AMP pocket. The short motif at 602–606 is the 'KMSKS' region element; it reads KMSKS. Lys605 is a binding site for ATP. Residues Cys899, Cys902, Cys919, and Cys922 each contribute to the Zn(2+) site.

It belongs to the class-I aminoacyl-tRNA synthetase family. IleS type 1 subfamily. As to quaternary structure, monomer. Zn(2+) serves as cofactor.

The protein localises to the cytoplasm. It catalyses the reaction tRNA(Ile) + L-isoleucine + ATP = L-isoleucyl-tRNA(Ile) + AMP + diphosphate. Its function is as follows. Catalyzes the attachment of isoleucine to tRNA(Ile). As IleRS can inadvertently accommodate and process structurally similar amino acids such as valine, to avoid such errors it has two additional distinct tRNA(Ile)-dependent editing activities. One activity is designated as 'pretransfer' editing and involves the hydrolysis of activated Val-AMP. The other activity is designated 'posttransfer' editing and involves deacylation of mischarged Val-tRNA(Ile). The sequence is that of Isoleucine--tRNA ligase from Coxiella burnetii (strain RSA 331 / Henzerling II).